A 199-amino-acid polypeptide reads, in one-letter code: N-(5'-phosphoribosyl)anthranilate isomerase (199 aa).

Belongs to the TrpF family.

The catalysed reaction is N-(5-phospho-beta-D-ribosyl)anthranilate = 1-(2-carboxyphenylamino)-1-deoxy-D-ribulose 5-phosphate. It participates in amino-acid biosynthesis; L-tryptophan biosynthesis; L-tryptophan from chorismate: step 3/5. This is N-(5'-phosphoribosyl)anthranilate isomerase from Campylobacter jejuni subsp. jejuni serotype O:6 (strain 81116 / NCTC 11828).